A 215-amino-acid chain; its full sequence is Ribonuclease T (215 aa).

The 175-residue stretch at 20-194 (VVIDVETAGF…YDTLQTAKLF (175 aa)) folds into the Exonuclease domain. Residues D23, E25, H181, and D186 each contribute to the Mg(2+) site. The active-site Proton donor/acceptor is the H181.

The protein belongs to the RNase T family. Homodimer. It depends on Mg(2+) as a cofactor.

Trims short 3' overhangs of a variety of RNA species, leaving a one or two nucleotide 3' overhang. Responsible for the end-turnover of tRNA: specifically removes the terminal AMP residue from uncharged tRNA (tRNA-C-C-A). Also appears to be involved in tRNA biosynthesis. The sequence is that of Ribonuclease T from Yersinia pseudotuberculosis serotype I (strain IP32953).